A 142-amino-acid polypeptide reads, in one-letter code: Hemoglobin subunit alpha (142 aa).

In terms of domain architecture, Globin spans 2–142; sequence VLSPADKSNV…VSTVLTSKYR (141 aa). Ser-4 bears the Phosphoserine mark. An N6-succinyllysine mark is found at Lys-8 and Lys-12. Lys-17 is subject to N6-acetyllysine; alternate. Lys-17 carries the post-translational modification N6-succinyllysine; alternate. A Phosphotyrosine modification is found at Tyr-25. Ser-36 is subject to Phosphoserine. Lys-41 carries the N6-succinyllysine modification. Ser-50 carries the phosphoserine modification. Residue His-59 coordinates O2. A heme b-binding site is contributed by His-88. Ser-103 is subject to Phosphoserine. Thr-109 carries the phosphothreonine modification. Phosphoserine occurs at positions 125 and 132. Thr-135 and Thr-138 each carry phosphothreonine. Ser-139 bears the Phosphoserine mark.

It belongs to the globin family. As to quaternary structure, heterotetramer of two alpha chains and two beta chains. In terms of tissue distribution, red blood cells.

Involved in oxygen transport from the lung to the various peripheral tissues. In terms of biological role, hemopressin acts as an antagonist peptide of the cannabinoid receptor CNR1. Hemopressin-binding efficiently blocks cannabinoid receptor CNR1 and subsequent signaling. In Chlorocebus aethiops (Green monkey), this protein is Hemoglobin subunit alpha (HBA).